A 176-amino-acid chain; its full sequence is V-type proton ATPase 16 kDa proteolipid subunit (176 aa).

The Lumenal segment spans residues 1–17 (MSVLLRSVTELCPVYSP). Residues 18 to 38 (FFGSMGITASIVFTVFGGAYG) traverse the membrane as a helical segment. Over 39–62 (TAKSSVGISSVGVMKPEFIMRSLF) the chain is Cytoplasmic. Residues 63-83 (PVVFAGVIGLYGLIVCIVLFI) traverse the membrane as a helical segment. Over 84–98 (NVNKSEYSLNRAFLD) the chain is Lumenal. A helical membrane pass occupies residues 99–119 (LGAGLTCGLCGLASGMSIGIS). Over 120 to 136 (GDCGVRGAAQQPKLFVS) the chain is Cytoplasmic. Residues 137–157 (MLICLIFSEALALYGFIVALI) traverse the membrane as a helical segment. Residues 158–176 (MAATGDNSCVATASTSSSS) are Lumenal-facing.

This sequence belongs to the V-ATPase proteolipid subunit family. As to quaternary structure, V-ATPase is a heteromultimeric enzyme composed of a peripheral catalytic V1 complex (main components: subunits A, B, C, D, E, and F) attached to an integral membrane V0 proton pore complex (main component: the proteolipid protein; which is present as a hexamer that forms the proton-conducting pore).

It localises to the vacuole membrane. Its function is as follows. Proton-conducting pore forming subunit of the membrane integral V0 complex of vacuolar ATPase. V-ATPase is responsible for acidifying a variety of intracellular compartments in eukaryotic cells. The protein is V-type proton ATPase 16 kDa proteolipid subunit (VMA3) of Entamoeba dispar.